A 210-amino-acid chain; its full sequence is Thymidylate kinase (210 aa).

11 to 18 provides a ligand contact to ATP; that stretch reads GVDGSGKS.

Belongs to the thymidylate kinase family.

It carries out the reaction dTMP + ATP = dTDP + ADP. Functionally, phosphorylation of dTMP to form dTDP in both de novo and salvage pathways of dTTP synthesis. The polypeptide is Thymidylate kinase (Mycoplasmoides gallisepticum (strain R(low / passage 15 / clone 2)) (Mycoplasma gallisepticum)).